Reading from the N-terminus, the 1564-residue chain is ATP-dependent permease PDR10 (1564 aa).

The segment covering 1 to 16 (MLQAPSSSNSGLNQGN) has biased composition (polar residues). Residues 1 to 37 (MLQAPSSSNSGLNQGNAAPDGPPNETQPYEGLDAAAQ) are disordered. Residues 1–587 (MLQAPSSSNS…AAIFFAILFN (587 aa)) are Cytoplasmic-facing. In terms of domain architecture, ABC transporter 1 spans 174 to 430 (ISRRLFHRTH…FQRMGYVCPE (257 aa)). Transmembrane regions (helical) follow at residues 588–608 (AFSS…TEKH), 624–644 (TFSD…PYYF), 674–694 (RCIG…SVLL), 699–719 (MYTG…WISY), and 732–752 (INEF…GPNY). Residue asparagine 754 is glycosylated (N-linked (GlcNAc...) asparagine). Positions 839 to 849 (KGIVSEKKKKN) are enriched in basic residues. Residues 839-872 (KGIVSEKKKKNQPTLSTSDAEKDVEMNNNSSATD) are disordered. The chain crosses the membrane as a helical span at residues 841–861 (IVSEKKKKNQPTLSTSDAEKD). Topologically, residues 862–1304 (VEMNNNSSAT…IFMFTVVFNP (443 aa)) are cytoplasmic. In terms of domain architecture, ABC transporter 2 spans 923–1166 (FHWKNLCYDI…MINYFEAHGA (244 aa)). An ATP-binding site is contributed by 959–966 (GASGAGKT). Transmembrane regions (helical) follow at residues 1305–1325 (ILQQ…ARER), 1340–1360 (ILVE…VYYY), 1390–1410 (VYIS…ENAA), 1426–1446 (VLAT…VSPL), 1459–1479 (ANAS…PSGM), and 1491–1511 (STGT…FCQF). Residues 1512-1564 (SSTNDYLATVSSSYSRRWMNYGIFSAYIVFDYCAAIFLYWLVRVPKKSKKLKK) lie on the Cytoplasmic side of the membrane.

This sequence belongs to the ABC transporter superfamily. ABCG family. PDR (TC 3.A.1.205) subfamily.

It localises to the membrane. The chain is ATP-dependent permease PDR10 (PDR10) from Saccharomyces cerevisiae (strain ATCC 204508 / S288c) (Baker's yeast).